Here is a 484-residue protein sequence, read N- to C-terminus: Aspartyl/glutamyl-tRNA(Asn/Gln) amidotransferase subunit B (484 aa).

It belongs to the GatB/GatE family. GatB subfamily. In terms of assembly, heterotrimer of A, B and C subunits.

It carries out the reaction L-glutamyl-tRNA(Gln) + L-glutamine + ATP + H2O = L-glutaminyl-tRNA(Gln) + L-glutamate + ADP + phosphate + H(+). The enzyme catalyses L-aspartyl-tRNA(Asn) + L-glutamine + ATP + H2O = L-asparaginyl-tRNA(Asn) + L-glutamate + ADP + phosphate + 2 H(+). Its function is as follows. Allows the formation of correctly charged Asn-tRNA(Asn) or Gln-tRNA(Gln) through the transamidation of misacylated Asp-tRNA(Asn) or Glu-tRNA(Gln) in organisms which lack either or both of asparaginyl-tRNA or glutaminyl-tRNA synthetases. The reaction takes place in the presence of glutamine and ATP through an activated phospho-Asp-tRNA(Asn) or phospho-Glu-tRNA(Gln). This is Aspartyl/glutamyl-tRNA(Asn/Gln) amidotransferase subunit B from Anaeromyxobacter dehalogenans (strain 2CP-C).